The primary structure comprises 160 residues: Cytochrome b6-f complex subunit 4 (160 aa).

3 helical membrane passes run 36-56 (LLYV…GLAI), 95-115 (LLGV…PFIE), and 131-151 (TVFL…TMPI).

The protein belongs to the cytochrome b family. PetD subfamily. As to quaternary structure, the 4 large subunits of the cytochrome b6-f complex are cytochrome b6, subunit IV (17 kDa polypeptide, petD), cytochrome f and the Rieske protein, while the 4 small subunits are petG, petL, petM and petN. The complex functions as a dimer.

It localises to the plastid. The protein resides in the chloroplast thylakoid membrane. Component of the cytochrome b6-f complex, which mediates electron transfer between photosystem II (PSII) and photosystem I (PSI), cyclic electron flow around PSI, and state transitions. The protein is Cytochrome b6-f complex subunit 4 of Pyropia yezoensis (Susabi-nori).